The chain runs to 437 residues: Elongation factor Tu, mitochondrial (437 aa).

Residues 1-38 constitute a mitochondrion transit peptide; that stretch reads MSALLPRLLTRTAFKASGKLLRLSSVISRTFSQTTTSY. The 197-residue stretch at 46-242 folds into the tr-type G domain; it reads KPHVNIGTIG…AVDEYIPTPE (197 aa). The tract at residues 55-62 is G1; it reads GHVDHGKT. 55 to 62 provides a ligand contact to GTP; it reads GHVDHGKT. A G2 region spans residues 96-100; it reads GITIS. The interval 117-120 is G3; sequence DCPG. GTP contacts are provided by residues 117 to 121 and 172 to 175; these read DCPGH and NKVD. The tract at residues 172–175 is G4; the sequence is NKVD. Residues 210 to 212 are G5; that stretch reads SAL.

This sequence belongs to the TRAFAC class translation factor GTPase superfamily. Classic translation factor GTPase family. EF-Tu/EF-1A subfamily. Post-translationally, the precursor is processed in two steps involving mitochondrial intermediate peptidase (MIP) and mitochondrial processing peptidase (MPP).

It localises to the mitochondrion. It functions in the pathway protein biosynthesis; polypeptide chain elongation. G-protein that, in its active GTP-bound form, binds to and delivers aminoacyl-tRNA to the A-site of ribosomes during protein biosynthesis. In the presence of a correct codon-anticodon match between the aminoacyl-tRNA and the A-site codon of the ribosome-bound mRNA, the ribosome acts as a GTPase activator and the GTP is hydrolyzed. The inactive GDP-bound form leaves the ribosome and must be recycled before binding another molecule of aminoacyl-tRNA. Required for mitochondrial protein biosynthesis and maintenance of mitochondrial DNA. The sequence is that of Elongation factor Tu, mitochondrial (TUF1) from Saccharomyces cerevisiae (strain ATCC 204508 / S288c) (Baker's yeast).